A 265-amino-acid chain; its full sequence is Expansin-like A2 (265 aa).

A signal peptide spans 1-21; it reads MLQGFLFLLSVVLLFSSSAAA. Positions 42–148 constitute an Expansin-like EG45 domain; the sequence is SGACAYGSMA…RRVPCDYGNK (107 aa). Residues Asn-100 and Asn-103 are each glycosylated (N-linked (GlcNAc...) asparagine). In terms of domain architecture, Expansin-like CBD spans 162 to 244; the sequence is NYLAIKLLYQ…NWEAGKSYDA (83 aa).

It belongs to the expansin family. Expansin-like A subfamily.

Its subcellular location is the secreted. This chain is Expansin-like A2 (EXLA2), found in Arabidopsis thaliana (Mouse-ear cress).